Here is a 78-residue protein sequence, read N- to C-terminus: Large ribosomal subunit protein uL29 (78 aa).

This sequence belongs to the universal ribosomal protein uL29 family.

This chain is Large ribosomal subunit protein uL29, found in Rippkaea orientalis (strain PCC 8801 / RF-1) (Cyanothece sp. (strain PCC 8801)).